Here is a 296-residue protein sequence, read N- to C-terminus: Methylsterol monooxygenase 1 (296 aa).

A run of 2 helical transmembrane segments spans residues 55–75 (LLVH…FQFI) and 100–120 (TLIF…YYFT). One can recognise a Fatty acid hydroxylase domain in the interval 145–274 (CAVIEDAWHY…FTWWDRIFGT (130 aa)). The Histidine box-1 signature appears at 157–161 (HRLLH). A Histidine box-2 motif is present at residues 170-174 (HKVHH). A helical membrane pass occupies residues 199–219 (FFIGIVVFCNHVVLLWAWVIC). The Histidine box-3 signature appears at 249-255 (FHDFHHM).

This sequence belongs to the sterol desaturase family. It depends on Fe cation as a cofactor.

It is found in the endoplasmic reticulum membrane. It carries out the reaction 4,4-dimethyl-5alpha-cholest-7-en-3beta-ol + 6 Fe(II)-[cytochrome b5] + 3 O2 + 5 H(+) = 4alpha-carboxy-4beta-methyl-5alpha-cholest-7-ene-3beta-ol + 6 Fe(III)-[cytochrome b5] + 4 H2O. The protein operates within steroid biosynthesis; zymosterol biosynthesis; zymosterol from lanosterol: step 3/6. Catalyzes the first step in the removal of the two C-4 methyl groups of 4,4-dimethylzymosterol. This is Methylsterol monooxygenase 1 (MSMO1) from Gallus gallus (Chicken).